The chain runs to 301 residues: Putative glycosyltransferase MJ1113 (301 aa).

A run of 8 helical transmembrane segments spans residues 2–22 (GHYF…SAVL), 62–82 (FIPF…IIGI), 95–115 (LILL…NSYV), 117–137 (LIEI…TNML), 140–160 (FNGL…LVLF), 164–184 (YTTG…LLIF), 191–211 (VFPG…LAVV), and 280–300 (VTVL…ISLI).

It belongs to the glycosyltransferase 4 family.

The protein localises to the cell membrane. In Methanocaldococcus jannaschii (strain ATCC 43067 / DSM 2661 / JAL-1 / JCM 10045 / NBRC 100440) (Methanococcus jannaschii), this protein is Putative glycosyltransferase MJ1113.